We begin with the raw amino-acid sequence, 366 residues long: S-adenosylmethionine decarboxylase proenzyme 1 (366 aa).

Active-site residues include Glu-9 and Glu-12. Glu-68 is a substrate binding site. Ser-69 serves as the catalytic Schiff-base intermediate with substrate; via pyruvic acid. Ser-69 bears the Pyruvic acid (Ser); by autocatalysis mark. The Proton donor; for catalytic activity role is filled by Cys-83. Active-site proton acceptor; for processing activity residues include Ser-233 and His-246. Glu-250 serves as a coordination point for substrate.

Belongs to the eukaryotic AdoMetDC family. Pyruvate serves as cofactor. In terms of processing, is synthesized initially as an inactive proenzyme. Formation of the active enzyme involves a self-maturation process in which the active site pyruvoyl group is generated from an internal serine residue via an autocatalytic post-translational modification. Two non-identical subunits are generated from the proenzyme in this reaction, and the pyruvate is formed at the N-terminus of the alpha chain, which is derived from the carboxyl end of the proenzyme. The post-translation cleavage follows an unusual pathway, termed non-hydrolytic serinolysis, in which the side chain hydroxyl group of the serine supplies its oxygen atom to form the C-terminus of the beta chain, while the remainder of the serine residue undergoes an oxidative deamination to produce ammonia and the pyruvoyl group blocking the N-terminus of the alpha chain.

It catalyses the reaction S-adenosyl-L-methionine + H(+) = S-adenosyl 3-(methylsulfanyl)propylamine + CO2. Its pathway is amine and polyamine biosynthesis; S-adenosylmethioninamine biosynthesis; S-adenosylmethioninamine from S-adenosyl-L-methionine: step 1/1. Essential for biosynthesis of the polyamines spermidine and spermine. Essential for polyamine homeostasis, and normal plant embryogenesis, growth and development. The protein is S-adenosylmethionine decarboxylase proenzyme 1 of Arabidopsis thaliana (Mouse-ear cress).